Here is a 123-residue protein sequence, read N- to C-terminus: Small ribosomal subunit protein uS13 (123 aa).

Positions 93-123 are disordered; that stretch reads HRKGLPVRGQNTKNNARTRKGPAKAIAGKKK. A compositionally biased stretch (basic residues) spans 108–123; the sequence is ARTRKGPAKAIAGKKK.

It belongs to the universal ribosomal protein uS13 family. As to quaternary structure, part of the 30S ribosomal subunit. Forms a loose heterodimer with protein S19. Forms two bridges to the 50S subunit in the 70S ribosome.

Functionally, located at the top of the head of the 30S subunit, it contacts several helices of the 16S rRNA. In the 70S ribosome it contacts the 23S rRNA (bridge B1a) and protein L5 of the 50S subunit (bridge B1b), connecting the 2 subunits; these bridges are implicated in subunit movement. Contacts the tRNAs in the A and P-sites. The sequence is that of Small ribosomal subunit protein uS13 from Leuconostoc citreum (strain KM20).